Reading from the N-terminus, the 323-residue chain is tRNA U34 carboxymethyltransferase (323 aa).

Carboxy-S-adenosyl-L-methionine-binding positions include Lys91, Trp105, Lys110, Gly130, 152–154 (DPT), 181–182 (IE), Met196, Tyr200, and Arg315.

It belongs to the class I-like SAM-binding methyltransferase superfamily. CmoB family. Homotetramer.

The catalysed reaction is carboxy-S-adenosyl-L-methionine + 5-hydroxyuridine(34) in tRNA = 5-carboxymethoxyuridine(34) in tRNA + S-adenosyl-L-homocysteine + H(+). In terms of biological role, catalyzes carboxymethyl transfer from carboxy-S-adenosyl-L-methionine (Cx-SAM) to 5-hydroxyuridine (ho5U) to form 5-carboxymethoxyuridine (cmo5U) at position 34 in tRNAs. The protein is tRNA U34 carboxymethyltransferase of Photorhabdus laumondii subsp. laumondii (strain DSM 15139 / CIP 105565 / TT01) (Photorhabdus luminescens subsp. laumondii).